Here is an 83-residue protein sequence, read N- to C-terminus: Putative membrane protein insertion efficiency factor (83 aa).

Residues 62-83 form a disordered region; sequence KGGYDPVPPKSVKSAGNSKDSK.

It belongs to the UPF0161 family.

Its subcellular location is the cell inner membrane. Functionally, could be involved in insertion of integral membrane proteins into the membrane. This Chlorobaculum tepidum (strain ATCC 49652 / DSM 12025 / NBRC 103806 / TLS) (Chlorobium tepidum) protein is Putative membrane protein insertion efficiency factor.